Reading from the N-terminus, the 422-residue chain is Probable cell wall mannoprotein PIR32 (422 aa).

The first 21 residues, 1 to 21, serve as a signal peptide directing secretion; sequence MIHYLIFPILLIFFQIIKSSG. 2 disordered regions span residues 116 to 143 and 155 to 313; these read DGQV…EDCF and DYQD…EGYE. Residues 133–143 are compositionally biased toward acidic residues; it reads GDDDDDDEDCF. The span at 158–169 shows a compositional bias: polar residues; the sequence is DMNTQEQANEDS. Positions 179 to 214 form a coiled coil; sequence HQQVVDQNQQINEEEEETQEQQMQEENNNTNEIEDN. 2 stretches are compositionally biased toward low complexity: residues 180-189 and 198-209; these read QQVVDQNQQI and EQQMQEENNNTN. An N-linked (GlcNAc...) asparagine glycan is attached at asparagine 206. Positions 220-231 are enriched in acidic residues; sequence ETIEEIYDDIDN. N-linked (GlcNAc...) asparagine glycosylation is found at asparagine 232 and asparagine 237. Basic residues predominate over residues 238–248; the sequence is NSKKYHKKRPH. Basic and acidic residues-rich tracts occupy residues 249 to 284 and 300 to 311; these read NNYE…DHKW and QEQKPKHEKSEG. Residue asparagine 328 is glycosylated (N-linked (GlcNAc...) asparagine).

It belongs to the PIR protein family. Post-translationally, O-glycosylated. Extensively O-mannosylated.

Its subcellular location is the secreted. The protein localises to the cell wall. Probable structural component of the cell wall involved in cell wall integrity and virulence. In Candida albicans (strain SC5314 / ATCC MYA-2876) (Yeast), this protein is Probable cell wall mannoprotein PIR32 (PIR32).